Here is a 182-residue protein sequence, read N- to C-terminus: CKLF-like MARVEL transmembrane domain-containing protein 3 (182 aa).

Residues 1-12 (MWPPDPDPDPDP) show a composition bias toward acidic residues. The segment at 1–21 (MWPPDPDPDPDPEPAGGSRPG) is disordered. Positions 36-155 (FLCSLKGRLL…DFYLIFNDVA (120 aa)) constitute an MARVEL domain. The next 3 membrane-spanning stretches (helical) occupy residues 64 to 84 (ASAFLTAPLLEFLLALYFLFA), 101 to 121 (MDFLRCVTAALIYFAISITAI), and 131 to 151 (AAGVFGFFATIVFATDFYLIF).

The protein belongs to the chemokine-like factor family. As to expression, expressed in the leukocytes, placenta and testis.

Its subcellular location is the membrane. The protein is CKLF-like MARVEL transmembrane domain-containing protein 3 (CMTM3) of Homo sapiens (Human).